We begin with the raw amino-acid sequence, 359 residues long: MKFCNPFLRLILRRKPISMISPTMFLLSSPTTSSSIGHSNGMLRSRSEDNLNKLGECMDNMDEDVSKLFIEFQQTDLREDPDLFRLLNHYFTTSKGVSQLCESLRTCLERSENNECLLLDEALVDFELEKLGYGGSLEEASFRKTYRDLRNFNAFYNNNSGEEDDLDYCEFLRKFQTCHEELAKMVVKLEKTMKDIDKKLRRVRGRRAIVTAALLAPVIAVIFLSKLVAGLVPIEGLSTFVASRWRKSTESLKREKTAMSSMERGIIVALKQVEKISKLVSRLESVERSISLTAEFAVKKRSSVVVAMREVEEERKRLKSTLVDLDRETGLCNGFAQFGRTVALEKITEFLSRGDKSSK.

Residues 179 to 208 (HEELAKMVVKLEKTMKDIDKKLRRVRGRRA) adopt a coiled-coil conformation. A helical membrane pass occupies residues 214–234 (LLAPVIAVIFLSKLVAGLVPI).

This sequence belongs to the UPF0496 family.

It localises to the membrane. This Arabidopsis thaliana (Mouse-ear cress) protein is UPF0496 protein At3g57100.